Consider the following 507-residue polypeptide: ATP synthase subunit alpha, chloroplastic (507 aa).

Position 170–177 (170–177 (GDRQTGKT)) interacts with ATP. Disordered regions lie at residues 278–325 (PRRP…TQAG), 392–430 (EPEASAQFASDPDKATRNQSARGQRSRELLKQSQPAPLP), and 452–471 (GQVQGSPAQSREYLVTNKPE). The span at 282–303 (PGREAHPGDVPHLHPRPPERAA) shows a compositional bias: basic and acidic residues. Polar residues predominate over residues 305-322 (LSSQPGEGSTTASPTVET).

Belongs to the ATPase alpha/beta chains family. F-type ATPases have 2 components, CF(1) - the catalytic core - and CF(0) - the membrane proton channel. CF(1) has five subunits: alpha(3), beta(3), gamma(1), delta(1), epsilon(1). CF(0) has four main subunits: a, b, b' and c.

The protein resides in the plastid. Its subcellular location is the chloroplast thylakoid membrane. It carries out the reaction ATP + H2O + 4 H(+)(in) = ADP + phosphate + 5 H(+)(out). Its function is as follows. Produces ATP from ADP in the presence of a proton gradient across the membrane. The alpha chain is a regulatory subunit. This Selaginella uncinata (Blue spike-moss) protein is ATP synthase subunit alpha, chloroplastic.